The primary structure comprises 209 residues: Ribonuclease HII (209 aa).

An RNase H type-2 domain is found at 7–198 (GPVAGVDEAG…VAKAHQEWLH (192 aa)). A divalent metal cation contacts are provided by D13, E14, and D107.

It belongs to the RNase HII family. It depends on Mn(2+) as a cofactor. Requires Mg(2+) as cofactor.

Its subcellular location is the cytoplasm. It catalyses the reaction Endonucleolytic cleavage to 5'-phosphomonoester.. In terms of biological role, endonuclease that specifically degrades the RNA of RNA-DNA hybrids. The polypeptide is Ribonuclease HII (Corynebacterium glutamicum (strain R)).